A 234-amino-acid chain; its full sequence is UstYa family oxidase phomYd' (234 aa).

Positions 1–26 (MEKFFSPSRHNYADLSPTDVPASEES) are disordered. A helical transmembrane segment spans residues 47–69 (VLVNRLLAASTVALVMVSLWLGW). Residues 151 to 155 (HWDHC) carry the HXXHC 1 motif. Residue Asn208 is glycosylated (N-linked (GlcNAc...) asparagine).

The protein belongs to the ustYa family.

It is found in the membrane. Its pathway is mycotoxin biosynthesis. Functionally, ustYa family oxidase; part of the gene cluster that mediates the biosynthesis of the phomopsins, a group of hexapeptide mycotoxins which infects lupins and causes lupinosis disease in livestock. Within the pathway, phomYd' catalyzes the desaturation of the Asp moiety into 2,3-dehydroaspartic acid (dAsp). The pathway starts with the processing of the precursor phomA' by several endopeptidases including kexin proteases as well as the cluster-specific S41 family peptidase phomP1 and the oligopeptidase phomG' to produce 10 identical copies of the hexapeptide Tyr-Val-Ile-Pro-Ile-Asp. After being excised from the precursor peptide, the core peptides are cyclized and modified post-translationally by enzymes encoded within the gene cluster. The timing and order of proteolysis of the phomA' precursor and PTMs are still unknown. Two tyrosinase-like enzymes, phomQ1' and phomQ2, catalyze the chlorination and hydroxylation of Tyr, respectively. PhomYb, is proposed to be involved in the construction of the macrocyclic structure. The other 4 ustYa family proteins may be involved in PTMs that generate the unique structure of phomopsin A. PhomYa' is required for the hydroxylation of C-beta of Tyr. PhomYc', phomYd', and phomYe are responsible for the biosynthesis of 2,3-dehydroisoleucine (dIle), 2,3-dehydroaspartic acid (dAsp), and 3,4-dehydroproline (dPro), respectively. While dIle formation by phomYc' is indispensable for the installation of dAsp by phomYd', the order of the other PTMs have not been elucidated yet. Most of the biosynthetic enzymes likely have broad substrate specificity, and thus, there might be a metabolic grid from a precursor to phomopsin A. The enzyme(s) responsible for the biosynthesis of 3,4-dehydrovaline (dVal) have also not been identified yet. Finally, phomM' acts as an S-adenosylmethionine-dependent alpha-N-methyltransferase that catalyzes two successive N-methylation reactions, converting N-desmethyl-phomopsin A to phomopsin A and phomopsin A further to an N,N-dimethylated congener called phomopsin E. The chain is UstYa family oxidase phomYd' from Diaporthe leptostromiformis (Lupinosis disease fungus).